Consider the following 23-residue polypeptide: Potassium channel toxin alpha-KTx 13.4 (23 aa).

Intrachain disulfides connect Cys2/Cys15, Cys5/Cys20, and Cys9/Cys22. The interval 13–20 (GKCINGKC) is interaction with Ca(2+)-activated K(+) channels. Tyr23 is modified (tyrosine amide).

In terms of tissue distribution, expressed by the venom gland.

It localises to the secreted. Its function is as follows. Blocks the potassium channel Shaker B. This is Potassium channel toxin alpha-KTx 13.4 from Tityus stigmurus (Brazilian scorpion).